We begin with the raw amino-acid sequence, 344 residues long: Holliday junction branch migration complex subunit RuvB (344 aa).

The large ATPase domain (RuvB-L) stretch occupies residues 1 to 181; sequence MERIVTPAEM…FGVLCAMEYY (181 aa). Residues Leu-20, Arg-21, Gly-62, Lys-65, Thr-66, Thr-67, 128–130, Arg-171, Tyr-181, and Arg-218 each bind ATP; that span reads EDY. Residue Thr-66 participates in Mg(2+) binding. The segment at 182 to 252 is small ATPAse domain (RuvB-S); it reads DETQLKEIVI…EARDALELLE (71 aa). Residues 255–344 form a head domain (RuvB-H) region; the sequence is NQGFDKVDNK…SNKGQTSFFK (90 aa). 2 residues coordinate DNA: Arg-310 and Arg-315.

The protein belongs to the RuvB family. In terms of assembly, homohexamer. Forms an RuvA(8)-RuvB(12)-Holliday junction (HJ) complex. HJ DNA is sandwiched between 2 RuvA tetramers; dsDNA enters through RuvA and exits via RuvB. An RuvB hexamer assembles on each DNA strand where it exits the tetramer. Each RuvB hexamer is contacted by two RuvA subunits (via domain III) on 2 adjacent RuvB subunits; this complex drives branch migration. In the full resolvosome a probable DNA-RuvA(4)-RuvB(12)-RuvC(2) complex forms which resolves the HJ.

It is found in the cytoplasm. It carries out the reaction ATP + H2O = ADP + phosphate + H(+). Its function is as follows. The RuvA-RuvB-RuvC complex processes Holliday junction (HJ) DNA during genetic recombination and DNA repair, while the RuvA-RuvB complex plays an important role in the rescue of blocked DNA replication forks via replication fork reversal (RFR). RuvA specifically binds to HJ cruciform DNA, conferring on it an open structure. The RuvB hexamer acts as an ATP-dependent pump, pulling dsDNA into and through the RuvAB complex. RuvB forms 2 homohexamers on either side of HJ DNA bound by 1 or 2 RuvA tetramers; 4 subunits per hexamer contact DNA at a time. Coordinated motions by a converter formed by DNA-disengaged RuvB subunits stimulates ATP hydrolysis and nucleotide exchange. Immobilization of the converter enables RuvB to convert the ATP-contained energy into a lever motion, pulling 2 nucleotides of DNA out of the RuvA tetramer per ATP hydrolyzed, thus driving DNA branch migration. The RuvB motors rotate together with the DNA substrate, which together with the progressing nucleotide cycle form the mechanistic basis for DNA recombination by continuous HJ branch migration. Branch migration allows RuvC to scan DNA until it finds its consensus sequence, where it cleaves and resolves cruciform DNA. In Clostridium botulinum (strain Eklund 17B / Type B), this protein is Holliday junction branch migration complex subunit RuvB.